A 199-amino-acid chain; its full sequence is Cytochrome b (199 aa).

4 helical membrane passes run 1–8 (LTGLFLAM), 32–53 (WLIR…YFHI), 68–88 (WNIG…GYVL), and 133–153 (FFAF…LHLL). 2 residues coordinate heme b: His38 and His52. 2 residues coordinate heme b: His137 and His151. His156 contributes to the a ubiquinone binding site. Residues 181 to 199 (YKDLLGFAILLVALASLAH) form a helical membrane-spanning segment.

The protein belongs to the cytochrome b family. As to quaternary structure, the cytochrome bc1 complex contains 3 respiratory subunits (MT-CYB, CYC1 and UQCRFS1), 2 core proteins (UQCRC1 and UQCRC2) and probably 6 low-molecular weight proteins. Heme b serves as cofactor.

The protein resides in the mitochondrion inner membrane. Functionally, component of the ubiquinol-cytochrome c reductase complex (complex III or cytochrome b-c1 complex) that is part of the mitochondrial respiratory chain. The b-c1 complex mediates electron transfer from ubiquinol to cytochrome c. Contributes to the generation of a proton gradient across the mitochondrial membrane that is then used for ATP synthesis. This is Cytochrome b (mt-cyb) from Sarda chiliensis (Pacific bonito).